Here is a 102-residue protein sequence, read N- to C-terminus: Large ribosomal subunit protein bL21 (102 aa).

This sequence belongs to the bacterial ribosomal protein bL21 family. In terms of assembly, part of the 50S ribosomal subunit. Contacts protein L20.

Functionally, this protein binds to 23S rRNA in the presence of protein L20. In Shouchella clausii (strain KSM-K16) (Alkalihalobacillus clausii), this protein is Large ribosomal subunit protein bL21.